Consider the following 411-residue polypeptide: Arginine deiminase (411 aa).

Cys-399 serves as the catalytic Amidino-cysteine intermediate.

This sequence belongs to the arginine deiminase family.

The protein localises to the cytoplasm. It carries out the reaction L-arginine + H2O = L-citrulline + NH4(+). It participates in amino-acid degradation; L-arginine degradation via ADI pathway; carbamoyl phosphate from L-arginine: step 1/2. The chain is Arginine deiminase from Latilactobacillus sakei subsp. sakei (strain 23K) (Lactobacillus sakei subsp. sakei).